The primary structure comprises 542 residues: Importin subunit alpha (542 aa).

Met1 is modified (N-acetylmethionine). The span at 1 to 11 (MDNGTDSSTSK) shows a compositional bias: polar residues. An IBB domain is found at 1 to 65 (MDNGTDSSTS…RNFIPPTDGA (65 aa)). A disordered region spans residues 1–77 (MDNGTDSSTS…DEEDESSVSA (77 aa)). Basic and acidic residues predominate over residues 27 to 53 (FSADELRRRRDTQQVELRKAKRDEALA). One copy of the ARM 1; truncated repeat lies at 89-122 (LPQMTQQLNSDDMQEQLSATVKFRQILSREHRPP). ARM repeat units follow at residues 123–162 (IDVV…ASGT), 163–204 (SAQT…AGDS), 205–251 (TDYR…PQPD), 252–288 (WSVV…SDGP), 289–330 (QEAI…VTGN), 331–372 (DLQT…TAGN), 373–417 (TEQI…GLQR), and 418–471 (PDII…LNIN). The interval 209-335 (DYVLQCNAME…IVTGNDLQTQ (127 aa)) is NLS binding site 1. The tract at residues 419–505 (DIIRYLVSQG…KIYEKAYKII (87 aa)) is NLS binding site 2. One copy of the ARM 10; atypical repeat lies at 472–508 (ENADFIEKAGGMEKIFNCQQNENDKIYEKAYKIIETY).

This sequence belongs to the importin alpha family. In terms of assembly, forms a complex with an importin beta subunit. In the nucleus, interacts with NUP2 which accelerate release of NLSs, NUP2 is subsequently displaced by CSE1:RanGTP which mediates re-export and recycling. Interacts with HEH2, SHE2, and STS1.

It is found in the cytoplasm. It localises to the perinuclear region. Its function is as follows. Functions in nuclear protein import as an adapter protein for importin beta nuclear receptors. Binds specifically and directly to substrates containing either a simple or bipartite NLS motif. Promotes docking of import substrates to the nuclear envelope. Together with importin beta KAP95, mediates nuclear import of transcription factor GCN4. Together with tethering factor STS1, targets the proteasome to the nucleus. This is Importin subunit alpha (SRP1) from Saccharomyces cerevisiae (strain ATCC 204508 / S288c) (Baker's yeast).